The primary structure comprises 156 residues: Ribonuclease pancreatic (156 aa).

The N-terminal stretch at 1 to 26 (MGLEKSLVFFPLLVLLALGWVQPCLG) is a signal peptide. Residues K33 and R36 each coordinate substrate. H38 functions as the Proton acceptor in the catalytic mechanism. 4 disulfide bridges follow: C54/C112, C68/C123, C86/C138, and C93/C100. Residue 69–73 (KPVNT) participates in substrate binding. N-linked (GlcNAc...) asparagine glycosylation is present at N90. Positions 94 and 113 each coordinate substrate. The active-site Proton donor is H147.

It belongs to the pancreatic ribonuclease family. Monomer. Interacts with and forms tight 1:1 complexes with RNH1. Dimerization of two such complexes may occur. Interaction with RNH1 inhibits this protein. In terms of tissue distribution, pancreas.

It is found in the secreted. The catalysed reaction is an [RNA] containing cytidine + H2O = an [RNA]-3'-cytidine-3'-phosphate + a 5'-hydroxy-ribonucleotide-3'-[RNA].. It catalyses the reaction an [RNA] containing uridine + H2O = an [RNA]-3'-uridine-3'-phosphate + a 5'-hydroxy-ribonucleotide-3'-[RNA].. Its function is as follows. Endonuclease that catalyzes the cleavage of RNA on the 3' side of pyrimidine nucleotides. Acts on single-stranded and double-stranded RNA. The polypeptide is Ribonuclease pancreatic (RNASE1) (Glis glis (Fat dormouse)).